We begin with the raw amino-acid sequence, 1456 residues long: Alpha-2-macroglobulin-like protein 1 (1456 aa).

The signal sequence occupies residues 1 to 19 (MVPTILLSALLLHFTDVVA). N-linked (GlcNAc...) asparagine glycosylation is found at N48, N172, and N868.

It belongs to the protease inhibitor I39 (alpha-2-macroglobulin) family. In terms of assembly, homotetramer; consists of two dimer pairs that are disulfide-linked. Part of a complex composed of complement component C3, CLCA1/CLCA3, A2ML1/OH and ALB/serum albumin.

The protein localises to the secreted. Its function is as follows. Inhibits protease gelatinolytic complex activity against type 1 collagen. The polypeptide is Alpha-2-macroglobulin-like protein 1 (Mus musculus (Mouse)).